The sequence spans 103 residues: Large ribosomal subunit protein bL21 (103 aa).

Belongs to the bacterial ribosomal protein bL21 family. Part of the 50S ribosomal subunit. Contacts protein L20.

In terms of biological role, this protein binds to 23S rRNA in the presence of protein L20. This is Large ribosomal subunit protein bL21 from Acinetobacter baylyi (strain ATCC 33305 / BD413 / ADP1).